We begin with the raw amino-acid sequence, 102 residues long: NADH-quinone oxidoreductase subunit K (102 aa).

A run of 3 helical transmembrane segments spans residues 6 to 26 (LEHG…GLMV), 30 to 50 (ILFV…AFIV), and 62 to 82 (VMFI…LAIL).

It belongs to the complex I subunit 4L family. NDH-1 is composed of 13 different subunits. Subunits NuoA, H, J, K, L, M, N constitute the membrane sector of the complex.

It is found in the cell inner membrane. The catalysed reaction is a quinone + NADH + 5 H(+)(in) = a quinol + NAD(+) + 4 H(+)(out). Its function is as follows. NDH-1 shuttles electrons from NADH, via FMN and iron-sulfur (Fe-S) centers, to quinones in the respiratory chain. The immediate electron acceptor for the enzyme in this species is believed to be ubiquinone. Couples the redox reaction to proton translocation (for every two electrons transferred, four hydrogen ions are translocated across the cytoplasmic membrane), and thus conserves the redox energy in a proton gradient. The protein is NADH-quinone oxidoreductase subunit K of Pseudomonas putida (strain W619).